A 780-amino-acid chain; its full sequence is ATP-dependent DNA helicase RecG (780 aa).

Domain stretches follow at residues 1-350 (MLCS…GGIP), 351-549 (KKIE…EMPP), and 550-780 (GRKE…IEVG). Residues 154–252 (RKIFKLNDLL…VTPKEGEYVR (99 aa)) form a wedge domain region. Residues F367, L369, G399, S400, G401, K402, T403, and R436 each coordinate ATP. The 162-residue stretch at 383 to 544 (DMISEKPMNR…FYGDLDVTVI (162 aa)) folds into the Helicase ATP-binding domain. Positions 497–500 (DEQH) match the DEAH box motif. Positions 563–728 (RVNEVYEFVR…EYDLKTRGPG (166 aa)) constitute a Helicase C-terminal domain.

The protein belongs to the helicase family. RecG subfamily. In terms of assembly, monomer.

The enzyme catalyses Couples ATP hydrolysis with the unwinding of duplex DNA by translocating in the 3'-5' direction.. It carries out the reaction ATP + H2O = ADP + phosphate + H(+). Its function is as follows. Plays a critical role in recombination and DNA repair. Helps process Holliday junction intermediates to mature products by catalyzing branch migration. Has replication fork (Y-DNA) regression activity, unwinds stalled or blocked replication forks to make a HJ that can be resolved. Has a DNA unwinding activity characteristic of a DNA helicase with 3'-5' polarity. Might be a DNA translocase rather than a bona fide helicase. This is ATP-dependent DNA helicase RecG from Thermotoga maritima (strain ATCC 43589 / DSM 3109 / JCM 10099 / NBRC 100826 / MSB8).